The following is a 179-amino-acid chain: MSRLQEQYKNEILPALQKELDMSNPMQVPKIEKITINMGLGSALGDKKVLQSALKEMSLISGQKPLICNARKSVASFKLREGNPIGCKVTLRKERMYEFLDRLINIAIPRIRDFRGFKATAFDGRGNYNMGITEQITFAEIDFEKVTRILGMDIAITTTAKSDEEAKKLLVMFKFPFKG.

It belongs to the universal ribosomal protein uL5 family. In terms of assembly, part of the 50S ribosomal subunit; part of the 5S rRNA/L5/L18/L25 subcomplex. Contacts the 5S rRNA and the P site tRNA. Forms a bridge to the 30S subunit in the 70S ribosome.

Functionally, this is one of the proteins that bind and probably mediate the attachment of the 5S RNA into the large ribosomal subunit, where it forms part of the central protuberance. In the 70S ribosome it contacts protein S13 of the 30S subunit (bridge B1b), connecting the 2 subunits; this bridge is implicated in subunit movement. Contacts the P site tRNA; the 5S rRNA and some of its associated proteins might help stabilize positioning of ribosome-bound tRNAs. This is Large ribosomal subunit protein uL5 from Ruthia magnifica subsp. Calyptogena magnifica.